We begin with the raw amino-acid sequence, 139 residues long: MNVKIRNEIQALIRIQERNNNGGELREFICAREVDGYGEKTYLITFDHYSICARYCGESISRAIASGDAFNVDLWEYVMDREYICASDPEAREMWQRIWRDYRLMAKGWARCCYSSLALKAVQLSLRHIPASLREPLLY.

The protein localises to the host cytoplasm. This is an uncharacterized protein from Enterobacteriaceae (Bacteriophage Mu).